The following is a 582-amino-acid chain: Arginine--tRNA ligase (582 aa).

A 'HIGH' region motif is present at residues 128-138 (PNLAKEMHVGH).

It belongs to the class-I aminoacyl-tRNA synthetase family. Monomer.

The protein localises to the cytoplasm. It catalyses the reaction tRNA(Arg) + L-arginine + ATP = L-arginyl-tRNA(Arg) + AMP + diphosphate. In Colwellia psychrerythraea (strain 34H / ATCC BAA-681) (Vibrio psychroerythus), this protein is Arginine--tRNA ligase.